Reading from the N-terminus, the 178-residue chain is Caveolin-1 (178 aa).

S2 carries the N-acetylserine modification. S2 is subject to Phosphoserine. The interval 2-94 (SGGKYVDSEG…WKASFTTFTV (93 aa)) is required for homooligomerization. Topologically, residues 2 to 104 (SGGKYVDSEG…TKYWFYRLLS (103 aa)) are cytoplasmic. At K5 the chain carries N6-acetyllysine; alternate. Residue K5 forms a Glycyl lysine isopeptide (Lys-Gly) (interchain with G-Cter in ubiquitin); alternate linkage. At Y6 the chain carries Phosphotyrosine. At S9 the chain carries Phosphoserine. Y14 bears the Phosphotyrosine; by ABL1 mark. Y25 is subject to Phosphotyrosine. Glycyl lysine isopeptide (Lys-Gly) (interchain with G-Cter in ubiquitin) cross-links involve residues K26, K30, K39, K47, and K57. Residues 82–94 (DGIWKASFTTFTV) are interaction with CAVIN3. Positions 105-125 (ALFGIPMALIWGIYFAILSFL) form an intramembrane region, helical. Over 126–178 (HIWAVVPCIKSFLIEIQCVSRVYSIYVHTFCDPFFEAVGKIFSSIRINMQKEI) the chain is Cytoplasmic. Positions 131-142 (VPCIKSFLIEIQ) are interacts with SPRY1, SPRY2, SPRY3 and SPRY4. Residues C133, C143, and C156 are each lipidated (S-palmitoyl cysteine). The tract at residues 149 to 160 (SIYVHTFCDPFF) is interacts with SPRY1, SPRY2, and SPRY4. Residues 167–178 (FSSIRINMQKEI) are interacts with SPRY1, SPRY2, SPRY3 and SPRY4.

It belongs to the caveolin family. As to quaternary structure, homooligomer. Interacts with GLIPR2. Interacts with NOSTRIN. Interacts with SNAP25 and STX1A. Interacts (via the N-terminus) with DPP4; the interaction is direct. Interacts with CTNNB1, CDH1 and JUP. Interacts with PACSIN2; this interaction induces membrane tubulation. Interacts with SLC7A9. Interacts with BMX and BTK. Interacts with TGFBR1. Interacts with CAVIN3 (via leucine-zipper domain) in a cholesterol-sensitive manner. Interacts with CAVIN1. Interacts with EHD2 in a cholesterol-dependent manner. Forms a ternary complex with UBXN6 and VCP; mediates CAV1 targeting to lysosomes for degradation. Interacts with ABCG1; this interaction regulates ABCG1-mediated cholesterol efflux. Interacts with NEU3; this interaction enhances NEU3 sialidase activity within caveola. Interacts (via C-terminus) with SPRY1, SPRY2 (via C-terminus), SPRY3, and SPRY4. Interacts with IGFBP5; this interaction allows trafficking of IGFBP5 from the plasma membrane to the nucleus. Post-translationally, phosphorylated at Tyr-14 by ABL1 in response to oxidative stress. In terms of processing, ubiquitinated. Undergo monoubiquitination and multi- and/or polyubiquitination. Monoubiquitination of N-terminal lysines promotes integration in a ternary complex with UBXN6 and VCP which promotes oligomeric CAV1 targeting to lysosomes for degradation. Ubiquitinated by ZNRF1; leading to degradation and modulation of the TLR4-mediated immune response.

It localises to the golgi apparatus membrane. Its subcellular location is the cell membrane. It is found in the membrane. The protein resides in the caveola. The protein localises to the membrane raft. Its function is as follows. May act as a scaffolding protein within caveolar membranes. Forms a stable heterooligomeric complex with CAV2 that targets to lipid rafts and drives caveolae formation. Mediates the recruitment of CAVIN proteins (CAVIN1/2/3/4) to the caveolae. Interacts directly with G-protein alpha subunits and can functionally regulate their activity. Involved in the costimulatory signal essential for T-cell receptor (TCR)-mediated T-cell activation. Its binding to DPP4 induces T-cell proliferation and NF-kappa-B activation in a T-cell receptor/CD3-dependent manner. Recruits CTNNB1 to caveolar membranes and may regulate CTNNB1-mediated signaling through the Wnt pathway. Negatively regulates TGFB1-mediated activation of SMAD2/3 by mediating the internalization of TGFBR1 from membrane rafts leading to its subsequent degradation. Binds 20(S)-hydroxycholesterol (20(S)-OHC). The polypeptide is Caveolin-1 (CAV1) (Mustela putorius furo (European domestic ferret)).